Reading from the N-terminus, the 368-residue chain is Glutamyl-tRNA reductase (368 aa).

Substrate-binding positions include 43 to 46 (TCHR), S89, 94 to 96 (EHQ), and Q100. C44 (nucleophile) is an active-site residue. 164 to 169 (GTGMMG) is a binding site for NADP(+).

It belongs to the glutamyl-tRNA reductase family. As to quaternary structure, homodimer.

The enzyme catalyses (S)-4-amino-5-oxopentanoate + tRNA(Glu) + NADP(+) = L-glutamyl-tRNA(Glu) + NADPH + H(+). It participates in porphyrin-containing compound metabolism; protoporphyrin-IX biosynthesis; 5-aminolevulinate from L-glutamyl-tRNA(Glu): step 1/2. Catalyzes the NADPH-dependent reduction of glutamyl-tRNA(Glu) to glutamate 1-semialdehyde (GSA). This Thermosipho melanesiensis (strain DSM 12029 / CIP 104789 / BI429) protein is Glutamyl-tRNA reductase.